We begin with the raw amino-acid sequence, 485 residues long: NADH-quinone oxidoreductase subunit N (485 aa).

Transmembrane regions (helical) follow at residues 8 to 28, 35 to 55, 71 to 91, 105 to 125, 127 to 147, 159 to 179, 203 to 223, 235 to 255, 271 to 291, 297 to 317, 326 to 346, 373 to 393, 408 to 430, and 455 to 475; these read LIAL…MLSI, FLNA…LWFV, GFAM…CTFA, FYLL…ANHL, ALFL…GYAF, YTIL…LVYA, LLAG…LAPF, PAPV…GVVM, VVLG…ALSQ, LLGY…IALQ, VGVY…VVSL, AAVM…LGFI, WWLV…RVAV, and IVVL…QPLI.

It belongs to the complex I subunit 2 family. NDH-1 is composed of 13 different subunits. Subunits NuoA, H, J, K, L, M, N constitute the membrane sector of the complex.

Its subcellular location is the cell inner membrane. The catalysed reaction is a quinone + NADH + 5 H(+)(in) = a quinol + NAD(+) + 4 H(+)(out). NDH-1 shuttles electrons from NADH, via FMN and iron-sulfur (Fe-S) centers, to quinones in the respiratory chain. The immediate electron acceptor for the enzyme in this species is believed to be ubiquinone. Couples the redox reaction to proton translocation (for every two electrons transferred, four hydrogen ions are translocated across the cytoplasmic membrane), and thus conserves the redox energy in a proton gradient. The sequence is that of NADH-quinone oxidoreductase subunit N from Salmonella paratyphi C (strain RKS4594).